The following is a 124-amino-acid chain: Urease subunit beta (124 aa).

This sequence belongs to the urease beta subunit family. In terms of assembly, heterotrimer of UreA (gamma), UreB (beta) and UreC (alpha) subunits. Three heterotrimers associate to form the active enzyme.

It is found in the cytoplasm. The catalysed reaction is urea + 2 H2O + H(+) = hydrogencarbonate + 2 NH4(+). It participates in nitrogen metabolism; urea degradation; CO(2) and NH(3) from urea (urease route): step 1/1. This chain is Urease subunit beta, found in Halalkalibacterium halodurans (strain ATCC BAA-125 / DSM 18197 / FERM 7344 / JCM 9153 / C-125) (Bacillus halodurans).